The following is a 348-amino-acid chain: Phenylalanine--tRNA ligase alpha subunit (348 aa).

E269 contacts Mg(2+).

This sequence belongs to the class-II aminoacyl-tRNA synthetase family. Phe-tRNA synthetase alpha subunit type 1 subfamily. Tetramer of two alpha and two beta subunits. Requires Mg(2+) as cofactor.

Its subcellular location is the cytoplasm. The catalysed reaction is tRNA(Phe) + L-phenylalanine + ATP = L-phenylalanyl-tRNA(Phe) + AMP + diphosphate + H(+). This is Phenylalanine--tRNA ligase alpha subunit from Dechloromonas aromatica (strain RCB).